Here is a 298-residue protein sequence, read N- to C-terminus: Aspartate carbamoyltransferase catalytic subunit (298 aa).

The carbamoyl phosphate site is built by Arg-50 and Thr-51. Lys-79 provides a ligand contact to L-aspartate. Carbamoyl phosphate is bound by residues Arg-100, His-128, and Gln-131. The L-aspartate site is built by Arg-161 and Arg-220. Residues Leu-259 and Pro-260 each coordinate carbamoyl phosphate.

The protein belongs to the aspartate/ornithine carbamoyltransferase superfamily. ATCase family. Heterooligomer of catalytic and regulatory chains.

It catalyses the reaction carbamoyl phosphate + L-aspartate = N-carbamoyl-L-aspartate + phosphate + H(+). It participates in pyrimidine metabolism; UMP biosynthesis via de novo pathway; (S)-dihydroorotate from bicarbonate: step 2/3. Catalyzes the condensation of carbamoyl phosphate and aspartate to form carbamoyl aspartate and inorganic phosphate, the committed step in the de novo pyrimidine nucleotide biosynthesis pathway. This is Aspartate carbamoyltransferase catalytic subunit from Sulfurisphaera tokodaii (strain DSM 16993 / JCM 10545 / NBRC 100140 / 7) (Sulfolobus tokodaii).